Reading from the N-terminus, the 95-residue chain is Secretoglobin family 2A member 2 (95 aa).

The N-terminal stretch at Met-1–Ala-18 is a signal peptide. Asn-35 is a glycosylation site (N-linked (GlcNAc...) asparagine).

The protein belongs to the secretoglobin family. Lipophilin subfamily. Prostatein is composed of three different peptides called C1, C2 and C3. These form covalent C1:C3 (F) and C2:C3 (S) heterodimers whose non-covalent association forms tetrameric (C1:C3/C3:C2) prostatein molecules. Highly expressed in ventral prostate.

The protein resides in the secreted. Its function is as follows. Part of prostatein which is the major secretory glycoprotein of ventral prostate gland. Steroid-binding protein; can bind non-polar steroids, cholesterol and a group of small proline-rich peptides. This Rattus norvegicus (Rat) protein is Secretoglobin family 2A member 2 (Scgb2a2).